Here is a 342-residue protein sequence, read N- to C-terminus: L-threonine 3-dehydrogenase (342 aa).

Residue cysteine 38 participates in Zn(2+) binding. Catalysis depends on charge relay system residues threonine 40 and histidine 43. Positions 63, 64, 93, 96, 99, and 107 each coordinate Zn(2+). NAD(+) contacts are provided by residues isoleucine 175, aspartate 195, arginine 200, 262–264 (LGI), and 286–287 (IY).

The protein belongs to the zinc-containing alcohol dehydrogenase family. As to quaternary structure, homotetramer. Zn(2+) serves as cofactor.

The protein resides in the cytoplasm. The catalysed reaction is L-threonine + NAD(+) = (2S)-2-amino-3-oxobutanoate + NADH + H(+). Its pathway is amino-acid degradation; L-threonine degradation via oxydo-reductase pathway; glycine from L-threonine: step 1/2. Functionally, catalyzes the NAD(+)-dependent oxidation of L-threonine to 2-amino-3-ketobutyrate. The sequence is that of L-threonine 3-dehydrogenase from Paraburkholderia phymatum (strain DSM 17167 / CIP 108236 / LMG 21445 / STM815) (Burkholderia phymatum).